The primary structure comprises 289 residues: Urease accessory protein UreD (289 aa).

Belongs to the UreD family. In terms of assembly, ureD, UreF and UreG form a complex that acts as a GTP-hydrolysis-dependent molecular chaperone, activating the urease apoprotein by helping to assemble the nickel containing metallocenter of UreC. The UreE protein probably delivers the nickel.

The protein localises to the cytoplasm. Its function is as follows. Required for maturation of urease via the functional incorporation of the urease nickel metallocenter. The chain is Urease accessory protein UreD from Magnetococcus marinus (strain ATCC BAA-1437 / JCM 17883 / MC-1).